The sequence spans 200 residues: Recombination protein RecR (200 aa).

A C4-type zinc finger spans residues Cys-60 to Cys-75. The Toprim domain occupies Thr-83 to Pro-177.

Belongs to the RecR family.

In terms of biological role, may play a role in DNA repair. It seems to be involved in an RecBC-independent recombinational process of DNA repair. It may act with RecF and RecO. The chain is Recombination protein RecR from Francisella tularensis subsp. tularensis (strain SCHU S4 / Schu 4).